Reading from the N-terminus, the 158-residue chain is Low molecular weight phosphotyrosine protein phosphatase (158 aa).

Position 2 is an N-acetylalanine (alanine 2). The Nucleophile role is filled by cysteine 13. The active site involves arginine 19. The active-site Proton donor is the aspartate 130. Residues tyrosine 132 and tyrosine 133 each carry the phosphotyrosine modification.

The protein belongs to the low molecular weight phosphotyrosine protein phosphatase family. As to quaternary structure, interacts with EPHA2; dephosphorylates EPHA2. Interacts with EPHB1. In terms of assembly, interacts with the SH3 domain of SPTAN1. There is no interaction observed for isoforms 2 or 3. Phosphorylated by LCK. Phosphorylation at Tyr-132 increases its phosphatase activity. In terms of processing, not phosphorylated. As to expression, expressed in T-lymphocytes.

The protein localises to the cytoplasm. It carries out the reaction O-phospho-L-tyrosyl-[protein] + H2O = L-tyrosyl-[protein] + phosphate. It catalyses the reaction a phosphate monoester + H2O = an alcohol + phosphate. Inhibited by sulfhydryl reagents. Functionally, acts on tyrosine phosphorylated proteins, low-MW aryl phosphates and natural and synthetic acyl phosphates with differences in substrate specificity between isoform 1 and isoform 2. Its function is as follows. Does not possess phosphatase activity. This is Low molecular weight phosphotyrosine protein phosphatase from Homo sapiens (Human).